A 38-amino-acid polypeptide reads, in one-letter code: Large ribosomal subunit protein bL36 (38 aa).

This sequence belongs to the bacterial ribosomal protein bL36 family.

The chain is Large ribosomal subunit protein bL36 from Acinetobacter baylyi (strain ATCC 33305 / BD413 / ADP1).